A 219-amino-acid polypeptide reads, in one-letter code: Small ribosomal subunit protein uS3c (219 aa).

The 76-residue stretch at 43-118 (IKNYVQNNMI…KLNITITRIE (76 aa)) folds into the KH type-2 domain.

Belongs to the universal ribosomal protein uS3 family. In terms of assembly, part of the 30S ribosomal subunit.

Its subcellular location is the plastid. This Cuscuta exaltata (Tall dodder) protein is Small ribosomal subunit protein uS3c (rps3).